A 715-amino-acid chain; its full sequence is Gelsolin, cytoplasmic (715 aa).

The segment at 1–124 (MTTELEIQKA…YLIGGVASGF (124 aa)) is actin-severing. Residues 24 to 75 (FELVPVPKTNHGKFYTGDSYIILKTTALESGRGFEWNLHYWQGKESSQDERG) form a Gelsolin-like 1 repeat. The interval 72–75 (DERG) is actin-actin interfilament contact point. Residue 136 to 145 (KVLTRVKGKR) participates in a 1,2-diacyl-sn-glycero-3-phospho-(1D-myo-inositol-4,5-bisphosphate) binding. Gelsolin-like repeat units lie at residues 147 to 187 (VRAT…FEKN), 260 to 306 (LKIT…TERA), and 405 to 451 (LRKE…NERT). The segment at 384–715 (AAESKMIDDG…FLGWDKTLWD (332 aa)) is actin-binding, Ca-sensitive. Ca(2+) contacts are provided by Gly-421, Asp-422, Glu-449, Thr-499, Asn-539, Asp-540, Glu-562, Asp-642, and Glu-665. 2 Gelsolin-like repeats span residues 524 to 564 (CRAV…SEIQ) and 625 to 667 (FIAE…EEKM).

The protein belongs to the villin/gelsolin family. Predominantly in the body wall muscle, but expression is not restricted to muscle cells.

Its subcellular location is the cytoplasm. It is found in the cytoskeleton. Calcium-regulated, actin-modulating protein that binds to the plus (or barbed) ends of actin monomers or filaments, preventing monomer exchange (end-blocking or capping). It can promote the assembly of monomers into filaments (nucleation) as well as sever filaments already formed. The polypeptide is Gelsolin, cytoplasmic (Halocynthia roretzi (Sea squirt)).